The primary structure comprises 436 residues: Glutamyl-tRNA reductase (436 aa).

Residues 50 to 53 (TCNR), S110, 115 to 117 (ETQ), and Q121 each bind substrate. The active-site Nucleophile is the C51. 190–195 (GLGEMS) contacts NADP(+).

Belongs to the glutamyl-tRNA reductase family. As to quaternary structure, homodimer.

It carries out the reaction (S)-4-amino-5-oxopentanoate + tRNA(Glu) + NADP(+) = L-glutamyl-tRNA(Glu) + NADPH + H(+). The protein operates within porphyrin-containing compound metabolism; protoporphyrin-IX biosynthesis; 5-aminolevulinate from L-glutamyl-tRNA(Glu): step 1/2. Catalyzes the NADPH-dependent reduction of glutamyl-tRNA(Glu) to glutamate 1-semialdehyde (GSA). The polypeptide is Glutamyl-tRNA reductase (Wolinella succinogenes (strain ATCC 29543 / DSM 1740 / CCUG 13145 / JCM 31913 / LMG 7466 / NCTC 11488 / FDC 602W) (Vibrio succinogenes)).